A 224-amino-acid chain; its full sequence is 7-cyano-7-deazaguanine synthase (224 aa).

12-22 (LSGGLDSSTVT) serves as a coordination point for ATP. The Zn(2+) site is built by C193, C201, C204, and C207.

The protein belongs to the QueC family. It depends on Zn(2+) as a cofactor.

It carries out the reaction 7-carboxy-7-deazaguanine + NH4(+) + ATP = 7-cyano-7-deazaguanine + ADP + phosphate + H2O + H(+). It functions in the pathway purine metabolism; 7-cyano-7-deazaguanine biosynthesis. In terms of biological role, catalyzes the ATP-dependent conversion of 7-carboxy-7-deazaguanine (CDG) to 7-cyano-7-deazaguanine (preQ(0)). The chain is 7-cyano-7-deazaguanine synthase from Prochlorococcus marinus subsp. pastoris (strain CCMP1986 / NIES-2087 / MED4).